The primary structure comprises 346 residues: Putative [LysW]-L-2-aminoadipate/[LysW]-L-glutamate phosphate reductase (346 aa).

An NADP(+)-binding site is contributed by 12 to 15; sequence SGFT. The active site involves Cys147. Residue Asn310 participates in NADP(+) binding.

The protein belongs to the NAGSA dehydrogenase family. Type 1 subfamily. LysY sub-subfamily.

It is found in the cytoplasm. The catalysed reaction is [amino-group carrier protein]-C-terminal-N-(1-carboxy-5-oxopentan-1-yl)-L-glutamine + phosphate + NADP(+) = [amino-group carrier protein]-C-terminal-N-(1-carboxy-5-phosphooxy-5-oxopentan-1-yl)-L-glutamine + NADPH + H(+). It catalyses the reaction [amino-group carrier protein]-C-terminal-gamma-(L-glutamyl-5-semialdehyde)-L-glutamate + phosphate + NADP(+) = [amino-group carrier protein]-C-terminal-gamma-(5-phospho-L-glutamyl)-L-glutamate + NADPH + H(+). Its pathway is amino-acid biosynthesis; L-lysine biosynthesis via AAA pathway; L-lysine from L-alpha-aminoadipate (Thermus route): step 3/5. It participates in amino-acid biosynthesis; L-arginine biosynthesis. In terms of biological role, involved in both the arginine and lysine biosynthetic pathways. This is Putative [LysW]-L-2-aminoadipate/[LysW]-L-glutamate phosphate reductase from Natronomonas pharaonis (strain ATCC 35678 / DSM 2160 / CIP 103997 / JCM 8858 / NBRC 14720 / NCIMB 2260 / Gabara) (Halobacterium pharaonis).